A 570-amino-acid chain; its full sequence is Protein misato homolog 1 (570 aa).

S495 bears the Phosphoserine mark.

It belongs to the misato family. As to expression, present in all cell lines tested (at protein level). Widely expressed.

It is found in the mitochondrion outer membrane. It localises to the cytoplasm. Functionally, involved in the regulation of mitochondrial distribution and morphology. Required for mitochondrial fusion and mitochondrial network formation. In Homo sapiens (Human), this protein is Protein misato homolog 1 (MSTO1).